The primary structure comprises 99 residues: Transmembrane protein 14A (99 aa).

Helical transmembrane passes span Met-1–Lys-21, Gly-24–Tyr-44, and Pro-79–Leu-99.

The protein belongs to the TMEM14 family.

It is found in the mitochondrion membrane. The protein localises to the endoplasmic reticulum membrane. Functionally, inhibits apoptosis via negative regulation of the mitochondrial outer membrane permeabilization involved in apoptotic signaling pathway. The sequence is that of Transmembrane protein 14A (TMEM14A) from Sus scrofa (Pig).